The sequence spans 616 residues: Replication protein A 70 kDa DNA-binding subunit (616 aa).

An N-acetylmethionine modification is found at M1. Glycyl lysine isopeptide (Lys-Gly) (interchain with G-Cter in ubiquitin) cross-links involve residues K22 and K88. The segment at 121–155 (GLGQPQVAPPAPAASPAASSRPQPQNGTSGAGSTV) is disordered. Residues 134 to 145 (ASPAASSRPQPQ) show a composition bias toward low complexity. The span at 146-155 (NGTSGAGSTV) shows a compositional bias: polar residues. An N6-acetyllysine; alternate mark is found at K163 and K167. Glycyl lysine isopeptide (Lys-Gly) (interchain with G-Cter in ubiquitin); alternate cross-links involve residues K163 and K167. Phosphothreonine is present on T180. A Glycyl lysine isopeptide (Lys-Gly) (interchain with G-Cter in ubiquitin) cross-link involves residue K183. T191 is subject to Phosphothreonine. A DNA-binding region (OB) is located at residues 197 to 281 (WTICARVTNK…VKNDYEMTFN (85 aa)). Residues K220 and K244 each participate in a glycyl lysine isopeptide (Lys-Gly) (interchain with G-Cter in ubiquitin) cross-link. K259 is modified (N6-acetyllysine; alternate). K259 participates in a covalent cross-link: Glycyl lysine isopeptide (Lys-Gly) (interchain with G-Cter in ubiquitin); alternate. Glycyl lysine isopeptide (Lys-Gly) (interchain with G-Cter in ubiquitin) cross-links involve residues K267 and K331. S384 bears the Phosphoserine mark. Glycyl lysine isopeptide (Lys-Gly) (interchain with G-Cter in ubiquitin) cross-links involve residues K410 and K431. K449 participates in a covalent cross-link: Glycyl lysine isopeptide (Lys-Gly) (interchain with G-Cter in SUMO). K458 participates in a covalent cross-link: Glycyl lysine isopeptide (Lys-Gly) (interchain with G-Cter in ubiquitin). The segment at 481–503 (CPTQDCNKKVIDQQNGLYRCEKC) adopts a C4-type zinc-finger fold. K553 is covalently cross-linked (Glycyl lysine isopeptide (Lys-Gly) (interchain with G-Cter in ubiquitin)). A Glycyl lysine isopeptide (Lys-Gly) (interchain with G-Cter in SUMO) cross-link involves residue K577.

It belongs to the replication factor A protein 1 family. In terms of assembly, component of the canonical replication protein A complex (RPA), a heterotrimer composed of RPA1, RPA2 and RPA3. The DNA-binding activity may reside exclusively on the RPA1 subunit. Interacts with PRPF19; the PRP19-CDC5L complex is recruited to the sites of DNA repair where it ubiquitinates the replication protein A complex (RPA). Interacts with RIPK1. Interacts with the polymerase alpha subunit POLA1/p180; this interaction stabilizes the replicative complex and reduces the misincorporation rate of DNA polymerase alpha by acting as a fidelity clamp. Interacts with RAD51 and SENP6 to regulate DNA repair. Interacts with HELB; this interaction promotes HELB recruitment to chromatin following DNA damage. Interacts with PRIMPOL; leading to recruit PRIMPOL on chromatin and stimulate its DNA primase activity. Interacts with XPA; the interaction is direct and associates XPA with the RPA complex. Interacts with ETAA1; the interaction is direct and promotes ETAA1 recruitment at stalled replication forks. Interacts with RPA1; this interaction associates HROB with the RPA complex. Interacts (when poly-ADP-ribosylated) with HTATSF1. Post-translationally, DNA damage-induced 'Lys-63'-linked polyubiquitination by PRPF19 mediates ATRIP recruitment to the RPA complex at sites of DNA damage and activation of ATR. Ubiquitinated by RFWD3 at stalled replication forks in response to DNA damage: ubiquitination by RFWD3 does not lead to degradation by the proteasome and promotes removal of the RPA complex from stalled replication forks, promoting homologous recombination. Sumoylated on lysine residues Lys-449 and Lys-577, with Lys-449 being the major site. Sumoylation promotes recruitment of RAD51 to the DNA damage foci to initiate DNA repair through homologous recombination. Desumoylated by SENP6. In terms of processing, poly-ADP-ribosylated by PARP1; promoting recruitment of HTATSF1.

It is found in the nucleus. The protein resides in the PML body. Its function is as follows. As part of the heterotrimeric replication protein A complex (RPA/RP-A), binds and stabilizes single-stranded DNA intermediates, that form during DNA replication or upon DNA stress. It prevents their reannealing and in parallel, recruits and activates different proteins and complexes involved in DNA metabolism. Thereby, it plays an essential role both in DNA replication and the cellular response to DNA damage. In the cellular response to DNA damage, the RPA complex controls DNA repair and DNA damage checkpoint activation. Through recruitment of ATRIP activates the ATR kinase a master regulator of the DNA damage response. It is required for the recruitment of the DNA double-strand break repair factors RAD51 and RAD52 to chromatin in response to DNA damage. Also recruits to sites of DNA damage proteins like XPA and XPG that are involved in nucleotide excision repair and is required for this mechanism of DNA repair. Also plays a role in base excision repair (BER) probably through interaction with UNG. Also recruits SMARCAL1/HARP, which is involved in replication fork restart, to sites of DNA damage. May also play a role in telomere maintenance. The polypeptide is Replication protein A 70 kDa DNA-binding subunit (RPA1) (Pongo abelii (Sumatran orangutan)).